An 89-amino-acid polypeptide reads, in one-letter code: Small ribosomal subunit protein uS15 (89 aa).

It belongs to the universal ribosomal protein uS15 family. As to quaternary structure, part of the 30S ribosomal subunit. Forms a bridge to the 50S subunit in the 70S ribosome, contacting the 23S rRNA.

One of the primary rRNA binding proteins, it binds directly to 16S rRNA where it helps nucleate assembly of the platform of the 30S subunit by binding and bridging several RNA helices of the 16S rRNA. Its function is as follows. Forms an intersubunit bridge (bridge B4) with the 23S rRNA of the 50S subunit in the ribosome. In Zymomonas mobilis subsp. mobilis (strain ATCC 31821 / ZM4 / CP4), this protein is Small ribosomal subunit protein uS15.